The following is a 158-amino-acid chain: 2-C-methyl-D-erythritol 2,4-cyclodiphosphate synthase (158 aa).

A divalent metal cation-binding residues include D9 and H11. 4-CDP-2-C-methyl-D-erythritol 2-phosphate-binding positions include 9-11 (DVH) and 35-36 (HS). A divalent metal cation is bound at residue H43. 4-CDP-2-C-methyl-D-erythritol 2-phosphate is bound by residues 57 to 59 (DIG), 62 to 66 (FPDTD), 133 to 136 (TTSE), F140, and R143.

It belongs to the IspF family. In terms of assembly, homotrimer. A divalent metal cation is required as a cofactor.

It catalyses the reaction 4-CDP-2-C-methyl-D-erythritol 2-phosphate = 2-C-methyl-D-erythritol 2,4-cyclic diphosphate + CMP. Its pathway is isoprenoid biosynthesis; isopentenyl diphosphate biosynthesis via DXP pathway; isopentenyl diphosphate from 1-deoxy-D-xylulose 5-phosphate: step 4/6. In terms of biological role, involved in the biosynthesis of isopentenyl diphosphate (IPP) and dimethylallyl diphosphate (DMAPP), two major building blocks of isoprenoid compounds. Catalyzes the conversion of 4-diphosphocytidyl-2-C-methyl-D-erythritol 2-phosphate (CDP-ME2P) to 2-C-methyl-D-erythritol 2,4-cyclodiphosphate (ME-CPP) with a corresponding release of cytidine 5-monophosphate (CMP). The chain is 2-C-methyl-D-erythritol 2,4-cyclodiphosphate synthase from Pasteurella multocida (strain Pm70).